The sequence spans 212 residues: Ribosomal RNA small subunit methyltransferase G (212 aa).

Residues Gly73, Phe78, 96–98 (ESS), 124–125 (VE), and Arg141 contribute to the S-adenosyl-L-methionine site.

The protein belongs to the methyltransferase superfamily. RNA methyltransferase RsmG family.

The protein resides in the cytoplasm. Functionally, specifically methylates the N7 position of a guanine in 16S rRNA. In Aster yellows witches'-broom phytoplasma (strain AYWB), this protein is Ribosomal RNA small subunit methyltransferase G.